The sequence spans 91 residues: Acyl-CoA-binding domain-containing protein 1 (91 aa).

Residues 3-88 (LQEDFEQYAE…VKQLLEEAAA (86 aa)) form the ACB domain. An acyl-CoA contacts are provided by residues Lys-15, 30 to 34 (YGLYK), Lys-56, and Tyr-75.

This sequence belongs to the ACBP family. As to expression, highly expressed in leaves. Expressed at low levels in roots and seeds.

Its subcellular location is the cytoplasm. It is found in the cytosol. Binds medium- and long-chain acyl-CoA esters with high affinity. Can interact in vitro with palmitoyl-CoA, oleoyl-CoA, linoleoyl-CoA and linolenoyl-CoA. Binds phosphatidic acid (PA) and phosphatidylcholine (PC) in vitro. May play a role in the biosynthesis of phospholipids. The sequence is that of Acyl-CoA-binding domain-containing protein 1 from Oryza sativa subsp. japonica (Rice).